Reading from the N-terminus, the 185-residue chain is Elongation factor P (185 aa).

The protein belongs to the elongation factor P family.

It localises to the cytoplasm. It participates in protein biosynthesis; polypeptide chain elongation. Involved in peptide bond synthesis. Stimulates efficient translation and peptide-bond synthesis on native or reconstituted 70S ribosomes in vitro. Probably functions indirectly by altering the affinity of the ribosome for aminoacyl-tRNA, thus increasing their reactivity as acceptors for peptidyl transferase. The sequence is that of Elongation factor P from Tropheryma whipplei (strain TW08/27) (Whipple's bacillus).